The chain runs to 499 residues: ALBINO3-like protein 1, chloroplastic (499 aa).

A chloroplast-targeting transit peptide spans 1-45 (MSSTISLKPTHLILSSFSTGKVLQFRRSRFSHTPSSSSSRYRTLV). 4 helical membrane passes run 115–135 (LSTVHVPYSYGFAIILLTVLV), 184–204 (LAGINPLAGCLPTLATIPVWI), 263–283 (LAYLVLPLLLVFSQYLSIQIM), and 302–322 (LLPLMIGYFALSVPSGLSLYW). Residues 378 to 499 (LKIPREKGGE…QQHSHETEKR (122 aa)) form a disordered region. Basic and acidic residues-rich tracts occupy residues 379-420 (KIPR…RQKA), 430-452 (DKAHEQDEKSDTAIVAEDDKKTE), and 486-499 (HDTEQQHSHETEKR). A coiled-coil region spans residues 397 to 436 (GERFRLLKEQEAKRRREKEERQKAEAALSNQNTDKAHEQD).

Belongs to the OXA1/ALB3/YidC (TC 2.A.9.2) family. Homodimer. Interacts with ALB3. Interacts with STIC2. In terms of tissue distribution, highly expressed in green tissues.

Its subcellular location is the plastid. The protein localises to the chloroplast thylakoid membrane. Required for the insertion of some light harvesting chlorophyll-binding proteins (LHCP) into the chloroplast thylakoid membrane. Plays a role in the accumulation of some cytochrome b6f components in the thylakoid membrane. Required for the assembly and/or stability of the F(1)F(0) ATP synthase in chloroplast thylakoid membranes. Functions to stabilize or promote assembly of F(1) during its attachment to the membrane-embedded F(0) part. Participates with STIC2 in thylakoid protein targeting. May function with a specific subset of thylakoidal proteins. The sequence is that of ALBINO3-like protein 1, chloroplastic from Arabidopsis thaliana (Mouse-ear cress).